Reading from the N-terminus, the 186-residue chain is Ribosome-recycling factor (186 aa).

The protein belongs to the RRF family.

The protein resides in the cytoplasm. Functionally, responsible for the release of ribosomes from messenger RNA at the termination of protein biosynthesis. May increase the efficiency of translation by recycling ribosomes from one round of translation to another. The polypeptide is Ribosome-recycling factor (Chlorobium limicola (strain DSM 245 / NBRC 103803 / 6330)).